A 368-amino-acid polypeptide reads, in one-letter code: MSLYPIYNFSAGPAVLPEAVLETARQEMLDYNGTGFPVMAMSHRSEMFLSILHHAEQDLRQLLKVPDNYKILFLQGGATTQFNMAAMNLAHGFRTADAVVTGNWSRIAYEQMSRLTDTEIRLAAHGGEQFDYLDLPPVETWDVAPDSAFVHFAVNETVNGLQYREVPRLSEGMPPLVCDMSSEILSREFDVADYGLIYAGAQKNIGPAGVTVVIVREDLLERCPNDIPDVFNYRSHINRDGMYNTPSTYAIYMSGLVFRWLQAQGGVKKIEAVNRLKAQTLYETIDGSGGFYINRIRPNARSKMNVVFQTRDEELDRRFVLEAELQGLCLLKGYKSVGGMRASIYNAMPLEGVRALADFMRDFQRRYG.

Arg44 lines the L-glutamate pocket. Pyridoxal 5'-phosphate is bound by residues 78-79 (AT), Trp104, Thr157, Asp179, and Gln202. An N6-(pyridoxal phosphate)lysine modification is found at Lys203. 244-245 (NT) contacts pyridoxal 5'-phosphate.

Belongs to the class-V pyridoxal-phosphate-dependent aminotransferase family. SerC subfamily. As to quaternary structure, homodimer. The cofactor is pyridoxal 5'-phosphate.

The protein localises to the cytoplasm. It carries out the reaction O-phospho-L-serine + 2-oxoglutarate = 3-phosphooxypyruvate + L-glutamate. The enzyme catalyses 4-(phosphooxy)-L-threonine + 2-oxoglutarate = (R)-3-hydroxy-2-oxo-4-phosphooxybutanoate + L-glutamate. Its pathway is amino-acid biosynthesis; L-serine biosynthesis; L-serine from 3-phospho-D-glycerate: step 2/3. The protein operates within cofactor biosynthesis; pyridoxine 5'-phosphate biosynthesis; pyridoxine 5'-phosphate from D-erythrose 4-phosphate: step 3/5. Its function is as follows. Catalyzes the reversible conversion of 3-phosphohydroxypyruvate to phosphoserine and of 3-hydroxy-2-oxo-4-phosphonooxybutanoate to phosphohydroxythreonine. The sequence is that of Phosphoserine aminotransferase from Neisseria meningitidis serogroup C / serotype 2a (strain ATCC 700532 / DSM 15464 / FAM18).